Reading from the N-terminus, the 87-residue chain is Small ribosomal subunit protein uS15 (87 aa).

This sequence belongs to the universal ribosomal protein uS15 family. In terms of assembly, part of the 30S ribosomal subunit. Forms a bridge to the 50S subunit in the 70S ribosome, contacting the 23S rRNA.

Functionally, one of the primary rRNA binding proteins, it binds directly to 16S rRNA where it helps nucleate assembly of the platform of the 30S subunit by binding and bridging several RNA helices of the 16S rRNA. Its function is as follows. Forms an intersubunit bridge (bridge B4) with the 23S rRNA of the 50S subunit in the ribosome. The protein is Small ribosomal subunit protein uS15 of Acetivibrio thermocellus (strain ATCC 27405 / DSM 1237 / JCM 9322 / NBRC 103400 / NCIMB 10682 / NRRL B-4536 / VPI 7372) (Clostridium thermocellum).